Consider the following 82-residue polypeptide: Large ribosomal subunit protein bL27 (82 aa).

The segment at 1-54 (MAHKKGQGASRNGRDSESKRLGMKVGAGQRVSTGSILVRQRGTKWHPSQNVGRG) is disordered.

This sequence belongs to the bacterial ribosomal protein bL27 family.

The chain is Large ribosomal subunit protein bL27 from Chlamydia caviae (strain ATCC VR-813 / DSM 19441 / 03DC25 / GPIC) (Chlamydophila caviae).